The chain runs to 154 residues: Large ribosomal subunit protein uL15 (154 aa).

Residues 1–13 (MKLHELKPAEGSR) are compositionally biased toward basic and acidic residues. Residues 1 to 52 (MKLHELKPAEGSRKNRKRVGRGPGGTDKTAGRGHKGQKSRSGAGKGSFFEGG) form a disordered region.

Belongs to the universal ribosomal protein uL15 family. Part of the 50S ribosomal subunit.

Functionally, binds to the 23S rRNA. In Deinococcus deserti (strain DSM 17065 / CIP 109153 / LMG 22923 / VCD115), this protein is Large ribosomal subunit protein uL15.